Here is a 626-residue protein sequence, read N- to C-terminus: Putative Xaa-Pro dipeptidyl-peptidase (626 aa).

Residues S231, D348, and H379 each act as charge relay system in the active site.

This sequence belongs to the peptidase S15 family.

It carries out the reaction Hydrolyzes Xaa-Pro-|- bonds to release unblocked, N-terminal dipeptides from substrates including Ala-Pro-|-p-nitroanilide and (sequentially) Tyr-Pro-|-Phe-Pro-|-Gly-Pro-|-Ile.. This Rhodopirellula baltica (strain DSM 10527 / NCIMB 13988 / SH1) protein is Putative Xaa-Pro dipeptidyl-peptidase.